The primary structure comprises 429 residues: Probable M18 family aminopeptidase 2 (429 aa).

Histidine 82, histidine 156, and histidine 401 together coordinate Zn(2+).

This sequence belongs to the peptidase M18 family. It depends on Zn(2+) as a cofactor.

The polypeptide is Probable M18 family aminopeptidase 2 (Pseudomonas fluorescens (strain Pf0-1)).